The chain runs to 761 residues: Semaphorin-4A (761 aa).

A signal peptide spans methionine 1–glycine 32. The Extracellular segment spans residues glycine 33 to histidine 683. In terms of domain architecture, Sema spans glutamine 36–arginine 494. Cysteine 113 and cysteine 124 are oxidised to a cystine. Residues asparagine 120 and asparagine 135 are each glycosylated (N-linked (GlcNAc...) asparagine). 3 cysteine pairs are disulfide-bonded: cysteine 142-cysteine 151, cysteine 269-cysteine 379, and cysteine 293-cysteine 339. Asparagine 496 carries N-linked (GlcNAc...) asparagine glycosylation. The PSI domain maps to asparagine 496–alanine 548. Disulfide bonds link cysteine 497–cysteine 514, cysteine 506–cysteine 523, and cysteine 580–cysteine 624. One can recognise an Ig-like C2-type domain in the interval asparagine 573 to phenylalanine 631. A glycan (N-linked (GlcNAc...) asparagine) is linked at asparagine 607. The chain crosses the membrane as a helical span at residues phenylalanine 684–alanine 704. At serine 705–alanine 761 the chain is on the cytoplasmic side. The tract at residues leucine 722–valine 749 is disordered. A compositionally biased stretch (basic and acidic residues) spans arginine 723 to arginine 743.

This sequence belongs to the semaphorin family. As to quaternary structure, interacts with PLXNB1, PLXNB2, PLXNB3, PLXND1 and TIMD2.

It is found in the cell membrane. In terms of biological role, cell surface receptor for PLXNB1, PLXNB2, PLXNB3 and PLXND1 that plays an important role in cell-cell signaling. Regulates glutamatergic and GABAergic synapse development. Promotes the development of inhibitory synapses in a PLXNB1-dependent manner and promotes the development of excitatory synapses in a PLXNB2-dependent manner. Plays a role in priming antigen-specific T-cells, promotes differentiation of Th1 T-helper cells, and thereby contributes to adaptive immunity. Promotes phosphorylation of TIMD2. Inhibits angiogenesis. Promotes axon growth cone collapse. Inhibits axonal extension by providing local signals to specify territories inaccessible for growing axons. The protein is Semaphorin-4A (SEMA4A) of Homo sapiens (Human).